The following is a 129-amino-acid chain: Glycine cleavage system H protein (129 aa).

The region spanning 24–106 is the Lipoyl-binding domain; it reads TYTVGITEHA…YTDGWIFKIR (83 aa). N6-lipoyllysine is present on K65.

This sequence belongs to the GcvH family. As to quaternary structure, the glycine cleavage system is composed of four proteins: P, T, L and H. The cofactor is (R)-lipoate.

The glycine cleavage system catalyzes the degradation of glycine. The H protein shuttles the methylamine group of glycine from the P protein to the T protein. This is Glycine cleavage system H protein from Enterobacter sp. (strain 638).